Here is an 859-residue protein sequence, read N- to C-terminus: ATP-dependent DNA helicase PIF1 (859 aa).

The transit peptide at 1-45 directs the protein to the mitochondrion; that stretch reads MPKWIRSTLNHIIPRRPFICSFNSFLLLKNVSHAKLSFSMSSRGF. Phosphoserine occurs at positions 70 and 72. The span at 142-157 shows a compositional bias: polar residues; sequence NSFDQSSQKKSRSTGF. The disordered stretch occupies residues 142 to 183; the sequence is NSFDQSSQKKSRSTGFKNPLRPALKKESSFDELQNSSISQER. Ser-169 carries the post-translational modification Phosphoserine. Polar residues predominate over residues 172–182; the sequence is DELQNSSISQE. Residue 258–265 participates in ATP binding; that stretch reads GSAGTGKS. Ser-584 carries the phosphoserine modification. Residues 727-746 mediate DNA binding; that stretch reads QAYVALSRAVSREGLQVLNF. The tract at residues 782-859 is disordered; sequence KRKLDYAPGP…GQDTEDHILE (78 aa). Low complexity predominate over residues 800-809; that stretch reads KSNSPAPISA. A compositionally biased stretch (basic and acidic residues) spans 844-859; sequence VSDEPRGQDTEDHILE.

It belongs to the helicase family. PIF1 subfamily. As to quaternary structure, monomer in solution. DNA binding induces dimerization. Associates with mitochondrial and telomeric DNA. Binding to mtDNA is non-specific and the protein seems to coat the entire mtDNA molecule. Binds to the telomerase RNA TLC1. Interacts with the mitochondrial single-strand DNA-binding protein RIM1. The cofactor is Mg(2+). Requires Mn(2+) as cofactor. Phosphorylated. Undergoes RAD53-dependent phosphorylation in response to loss of mtDNA.

The protein localises to the nucleus. Its subcellular location is the nucleolus. The protein resides in the mitochondrion inner membrane. The enzyme catalyses Couples ATP hydrolysis with the unwinding of duplex DNA at the replication fork by translocating in the 5'-3' direction. This creates two antiparallel DNA single strands (ssDNA). The leading ssDNA polymer is the template for DNA polymerase III holoenzyme which synthesizes a continuous strand.. It catalyses the reaction ATP + H2O = ADP + phosphate + H(+). Its function is as follows. DNA-dependent ATPase and 5'-3' DNA helicase required for the maintenance of both mitochondrial and nuclear genome stability. Efficiently unwinds G-quadruplex (G4) DNA structures and forked RNA-DNA hybrids. Appears to move along DNA in single nucleotide or base pair steps, powered by hydrolysis of 1 molecule of ATP. Processes at an unwinding rate of about 75 bp/s. Resolves G4 structures, preventing replication pausing and double-strand breaks (DSBs) at G4 motifs. Involved in the maintenance of telomeric DNA. Inhibits telomere elongation, de novo telomere formation and telomere addition to DSBs via catalytic inhibition of telomerase. Reduces the processivity of telomerase by displacing active telomerase from DNA ends. Releases telomerase by unwinding the short telomerase RNA/telomeric DNA hybrid that is the intermediate in the telomerase reaction. Involved in the maintenance of ribosomal (rDNA). Required for efficient fork arrest at the replication fork barrier within rDNA. Involved in the maintenance of mitochondrial (mtDNA). Required to maintain mtDNA under conditions that introduce dsDNA breaks in mtDNA, either preventing or repairing dsDNA breaks. May inhibit replication progression to allow time for repair. May have a general role in chromosomal replication by affecting Okazaki fragment maturation. May have a role in conjunction with DNA2 helicase/nuclease in 5'-flap extension during Okazaki fragment processing. This is ATP-dependent DNA helicase PIF1 from Saccharomyces cerevisiae (strain YJM789) (Baker's yeast).